Here is a 361-residue protein sequence, read N- to C-terminus: Fructose-bisphosphate aldolase (361 aa).

Ser-63 contacts D-glyceraldehyde 3-phosphate. The Proton donor role is filled by Asp-110. 4 residues coordinate Zn(2+): His-111, Asp-145, Glu-175, and His-227. Gly-228 serves as a coordination point for dihydroxyacetone phosphate. His-266 lines the Zn(2+) pocket. Residues 267–269 and 288–291 contribute to the dihydroxyacetone phosphate site; these read GGS and NLDT.

The protein belongs to the class II fructose-bisphosphate aldolase family. As to quaternary structure, homodimer. Zn(2+) serves as cofactor.

It carries out the reaction beta-D-fructose 1,6-bisphosphate = D-glyceraldehyde 3-phosphate + dihydroxyacetone phosphate. The protein operates within carbohydrate degradation; glycolysis; D-glyceraldehyde 3-phosphate and glycerone phosphate from D-glucose: step 4/4. Catalyzes the aldol condensation of dihydroxyacetone phosphate (DHAP or glycerone-phosphate) with glyceraldehyde 3-phosphate (G3P) to form fructose 1,6-bisphosphate (FBP) in gluconeogenesis and the reverse reaction in glycolysis. The sequence is that of Fructose-bisphosphate aldolase (FBA1) from Kluyveromyces lactis (strain ATCC 8585 / CBS 2359 / DSM 70799 / NBRC 1267 / NRRL Y-1140 / WM37) (Yeast).